The sequence spans 354 residues: Guanine nucleotide-binding protein G(q) subunit alpha (354 aa).

Residues Cys3 and Cys4 are each lipidated (S-palmitoyl cysteine). Residues 32–354 enclose the G-alpha domain; sequence RELKLLLLGT…QLNLKEYNLV (323 aa). Residues 35 to 48 form a G1 motif region; sequence KLLLLGTGESGKST. GTP-binding positions include 40 to 47, 174 to 180, 199 to 203, 269 to 272, and Ala326; these read GTGESGKS, LRVRVPT, DVGGQ, and NKKD. Positions 47 and 180 each coordinate Mg(2+). Residues 172–180 form a G2 motif region; it reads DILRVRVPT. Residues 195–204 form a G3 motif region; that stretch reads FRMVDVGGQR. The segment at 265-272 is G4 motif; the sequence is ILFLNKKD. Residues 324 to 329 are G5 motif; the sequence is TCATDT.

The protein belongs to the G-alpha family. G(q) subfamily. In terms of assembly, g proteins are composed of 3 units; alpha, beta and gamma. The alpha chain contains the guanine nucleotide binding site. As to expression, a high concentration was found in the retinal light-sensitive outer segment.

Its function is as follows. Guanine nucleotide-binding proteins (G proteins) are involved as modulators or transducers in various transmembrane signaling systems. Functionally, the G(q) alpha subunit is involved in the light-dependent activation of phospholipase C. This Loligo forbesii (Veined squid) protein is Guanine nucleotide-binding protein G(q) subunit alpha.